The primary structure comprises 479 residues: Cysteine--tRNA ligase (479 aa).

Zn(2+) is bound at residue Cys-29. The short motif at 31 to 41 (ATVQGAPHIGH) is the 'HIGH' region element. Residues 171–197 (QRVEDMQDAPDADPRGKRDPRDFALWK) form a disordered region. A compositionally biased stretch (basic and acidic residues) spans 182 to 197 (ADPRGKRDPRDFALWK). Residues Cys-224, His-249, and Glu-253 each coordinate Zn(2+). A 'KMSKS' region motif is present at residues 280 to 284 (KMSKS). ATP is bound at residue Lys-283.

This sequence belongs to the class-I aminoacyl-tRNA synthetase family. Monomer. Zn(2+) serves as cofactor.

It localises to the cytoplasm. The enzyme catalyses tRNA(Cys) + L-cysteine + ATP = L-cysteinyl-tRNA(Cys) + AMP + diphosphate. The chain is Cysteine--tRNA ligase from Kocuria rhizophila (strain ATCC 9341 / DSM 348 / NBRC 103217 / DC2201).